We begin with the raw amino-acid sequence, 115 residues long: Phosphoribosyl-AMP cyclohydrolase (115 aa).

Mg(2+) is bound at residue Asp80. A Zn(2+)-binding site is contributed by Cys81. Residues Asp82 and Asp84 each contribute to the Mg(2+) site. Zn(2+) is bound by residues Cys97 and Cys104.

It belongs to the PRA-CH family. In terms of assembly, homodimer. Mg(2+) is required as a cofactor. The cofactor is Zn(2+).

It is found in the cytoplasm. It carries out the reaction 1-(5-phospho-beta-D-ribosyl)-5'-AMP + H2O = 1-(5-phospho-beta-D-ribosyl)-5-[(5-phospho-beta-D-ribosylamino)methylideneamino]imidazole-4-carboxamide. Its pathway is amino-acid biosynthesis; L-histidine biosynthesis; L-histidine from 5-phospho-alpha-D-ribose 1-diphosphate: step 3/9. Its function is as follows. Catalyzes the hydrolysis of the adenine ring of phosphoribosyl-AMP. This is Phosphoribosyl-AMP cyclohydrolase from Nocardia farcinica (strain IFM 10152).